The following is a 418-amino-acid chain: NADH-quinone oxidoreductase subunit D (418 aa).

This sequence belongs to the complex I 49 kDa subunit family. In terms of assembly, NDH-1 is composed of 14 different subunits. Subunits NuoB, C, D, E, F, and G constitute the peripheral sector of the complex.

The protein resides in the cell inner membrane. The catalysed reaction is a quinone + NADH + 5 H(+)(in) = a quinol + NAD(+) + 4 H(+)(out). Its function is as follows. NDH-1 shuttles electrons from NADH, via FMN and iron-sulfur (Fe-S) centers, to quinones in the respiratory chain. The immediate electron acceptor for the enzyme in this species is believed to be ubiquinone. Couples the redox reaction to proton translocation (for every two electrons transferred, four hydrogen ions are translocated across the cytoplasmic membrane), and thus conserves the redox energy in a proton gradient. In Methylacidiphilum infernorum (isolate V4) (Methylokorus infernorum (strain V4)), this protein is NADH-quinone oxidoreductase subunit D.